The primary structure comprises 616 residues: Dihydroxy-acid dehydratase (616 aa).

Aspartate 81 contacts Mg(2+). Cysteine 122 serves as a coordination point for [2Fe-2S] cluster. Residues aspartate 123 and lysine 124 each contribute to the Mg(2+) site. Lysine 124 carries the post-translational modification N6-carboxylysine. Residue cysteine 195 coordinates [2Fe-2S] cluster. Glutamate 491 is a binding site for Mg(2+). Serine 517 serves as the catalytic Proton acceptor.

This sequence belongs to the IlvD/Edd family. Homodimer. It depends on [2Fe-2S] cluster as a cofactor. Requires Mg(2+) as cofactor.

It carries out the reaction (2R)-2,3-dihydroxy-3-methylbutanoate = 3-methyl-2-oxobutanoate + H2O. It catalyses the reaction (2R,3R)-2,3-dihydroxy-3-methylpentanoate = (S)-3-methyl-2-oxopentanoate + H2O. It participates in amino-acid biosynthesis; L-isoleucine biosynthesis; L-isoleucine from 2-oxobutanoate: step 3/4. It functions in the pathway amino-acid biosynthesis; L-valine biosynthesis; L-valine from pyruvate: step 3/4. Functions in the biosynthesis of branched-chain amino acids. Catalyzes the dehydration of (2R,3R)-2,3-dihydroxy-3-methylpentanoate (2,3-dihydroxy-3-methylvalerate) into 2-oxo-3-methylpentanoate (2-oxo-3-methylvalerate) and of (2R)-2,3-dihydroxy-3-methylbutanoate (2,3-dihydroxyisovalerate) into 2-oxo-3-methylbutanoate (2-oxoisovalerate), the penultimate precursor to L-isoleucine and L-valine, respectively. The protein is Dihydroxy-acid dehydratase of Escherichia coli O7:K1 (strain IAI39 / ExPEC).